A 62-amino-acid polypeptide reads, in one-letter code: Sperm histone (62 aa).

A disordered region spans residues M1–Y62. T9 carries the phosphothreonine modification.

The protein belongs to the protamine P1 family. As to expression, testis.

The protein localises to the nucleus. It is found in the chromosome. Functionally, protamines substitute for histones in the chromatin of sperm during the haploid phase of spermatogenesis. They compact sperm DNA into a highly condensed, stable and inactive complex. This Gallus gallus (Chicken) protein is Sperm histone.